The primary structure comprises 587 residues: APOBEC1 complementation factor (587 aa).

3 consecutive RRM domains span residues 56–134 (CEIF…ASVD), 136–218 (CRLF…WAEP), and 231–303 (KILY…LAKP). A required for nuclear localization region spans residues 360 to 409 (HFPATKGHLSNRAIIRAPSVRGAAGVRGLGGRGYLAYTGLGRGYQVKGDK). The residue at position 491 (Thr491) is a Phosphothreonine.

In terms of assembly, part of the apolipoprotein B mRNA editing complex with APOBEC1. Interacts with TNPO2; TNPO2 may be responsible for transport of A1CF into the nucleus. Interacts with SYNCRIP. Interacts with CELF2/CUGBP2. Interacts with RBM47.

It is found in the nucleus. Its subcellular location is the endoplasmic reticulum. The protein localises to the cytoplasm. In terms of biological role, essential component of the apolipoprotein B mRNA editing enzyme complex which is responsible for the postranscriptional editing of a CAA codon for Gln to a UAA codon for stop in APOB mRNA. Binds to APOB mRNA and is probably responsible for docking the catalytic subunit, APOBEC1, to the mRNA to allow it to deaminate its target cytosine. The complex also seems to protect the edited APOB mRNA from nonsense-mediated decay. The polypeptide is APOBEC1 complementation factor (A1CF) (Pongo abelii (Sumatran orangutan)).